A 1083-amino-acid polypeptide reads, in one-letter code: MDDVQIDDTFPVDLNGVTSLCSPEIPSFDFVSDETEKLEIGDTSIDDCDDALGDSMVCDPNSRLVPTGLTRTNRTDETIMFINAGGDDSKVLDSELNISRDDYFEGGDVLRTEESIVEAGDFPFIYQSARVGNFCYQLNNLLPGEYLIDFHFAEIINTNGPKGIRVFNVYVQDEKATEFDIFSVVGANRPLLLVDLRVMVMDDGLIRVRFEGINGSPVVCGICLRKAPQVSVPRTSQDFIKCENCATEIEISPTRKRLMRAKAHDKYEKKIAELSERYEHKTNECHEAWMSLTSANEQLEKVMMELNNKIYQARSLDQTVITQADCLKSITRKYENDKRHWATAIDSLQEKIEIMKREQSQLSQEAHECVEGIPELYKMVGGVQALVSQCEDLKQKYSEEQAKRKELYNHIQETKGNIRVFCRCRPLNTEETSTKSATIVDFDGAKDGELGVITGNNSKKSFKFDRVYTPKDGQVDVFADASPMVVSVLDGYNVCIFAYGQTGTGKTFTMEGTPQNRGVNYRTVEQLFEVARERRETISYNISVSVLEVYNEQIRDLLATSPGSKKLEIKQSSDGSHHVPGLVEANVENINEVWNVLQAGSNARSVGSNNVNEHSSRSHCMLSIMVKAKNLMNGDCTKSKLWLVDLAGSERLAKTDVQGERLKEAQNINRSLSALGDVIYALATKSSHIPYRNSKLTHLLQDSLGGDSKTLMFVQISPSEHDVSETLSSLNFATRVRGVELGPARKQVDTGEIQKLKAMVEKARQESRSKDESIKKMEENIQNLEGKNKGRDNSYRSLQEKNKDLQNQLDSVHNQSEKQYAQLQERLKSRDEICSNLQQKVKELECKLRERHQSDSAANNQKVKDLENNLKESEGSSLVWQQKVKDYENKLKESEGNSLVWQQKIKELEIKHKDEQSQEAVLLRQKIKELEMRLKEQEKHIQEMATTREFPEVANATPNEVKTCFKEDNFGNENMESNTNILRTSNRLKTKRHDSLNLNEMTRKKRASRSGETENNGDDPQMKEKRIRKSDPPKVFSRVVRPTRTASGSSSQVPVAQKRVIKREQQEVPVVKERDSKKKIWSR.

Residues 264–418 (HDKYEKKIAE…NHIQETKGNI (155 aa)) adopt a coiled-coil conformation. One can recognise a Kinesin motor domain in the interval 417–739 (NIRVFCRCRP…LNFATRVRGV (323 aa)). 500 to 507 (GQTGTGKT) is a binding site for ATP. Coiled coils occupy residues 746–876 (KQVD…SEGS) and 905–947 (IKEL…MATT). The interval 967–1083 (EDNFGNENME…RDSKKKIWSR (117 aa)) is disordered. Positions 971–985 (GNENMESNTNILRTS) are enriched in polar residues. Residues 1020 to 1032 (PQMKEKRIRKSDP) are compositionally biased toward basic and acidic residues. The segment covering 1044-1054 (RTASGSSSQVP) has biased composition (polar residues). A compositionally biased stretch (basic and acidic residues) spans 1062–1083 (KREQQEVPVVKERDSKKKIWSR).

The protein belongs to the TRAFAC class myosin-kinesin ATPase superfamily. Kinesin family. KIN-14 subfamily.

This chain is Kinesin-like protein KIN-14R, found in Arabidopsis thaliana (Mouse-ear cress).